The chain runs to 822 residues: Putative ESX-1 scaffolding and assembly protein SaeB (822 aa).

Functionally, may be involved in assembly of the ESX-1 / type VII specialized secretion system (T7SS), which exports several proteins including EsxA and EsxB. Involved in DNA conjugation in recipient (MDK8) but not donor (mc(2)155) strain. The chain is Putative ESX-1 scaffolding and assembly protein SaeB from Mycolicibacterium smegmatis (strain ATCC 700084 / mc(2)155) (Mycobacterium smegmatis).